The chain runs to 325 residues: Terpene synthase 11 (325 aa).

A DDxx(x)D/E motif motif is present at residues 97 to 102 (DDEYLE). The NDxxSxxxD/E motif motif lies at 227 to 235 (NDIYSFVKE).

The protein belongs to the terpene synthase family.

It catalyses the reaction (2E,6E)-farnesyl diphosphate = (E)-beta-farnesene + diphosphate. The catalysed reaction is (2E,6E)-farnesyl diphosphate = (3E,6E)-alpha-farnesene + diphosphate. It carries out the reaction geranylgeranyl diphosphate + H2O = (S)-(+)-nephthenol + diphosphate. Terpene synthase that converts its substrate farnesyl diphosphate (FPP) into the sesquiterpenes (E)-beta-farnesene and (E,E)-alpha-farnesene. TPS11 also converts geranylgeranyl diphosphate (GGPP) into the diterpene (S)-nephthenol. In Dictyostelium purpureum (Slime mold), this protein is Terpene synthase 11.